Reading from the N-terminus, the 264-residue chain is Endochitinase At2g43590 (264 aa).

The signal sequence occupies residues 1-24 (MAFTKISLVLLLCLLGFFSETVKS). Residues 25–59 (QNCGCAPNLCCSQFGYCGTDDAYCGVGCRSGPCRG) form the Chitin-binding type-1 domain. Cystine bridges form between C27–C35, C29–C41, C34–C48, and C52–C57. The interval 66–264 (GSVGSIVTQG…GVDPGPNLSC (199 aa)) is catalytic. The active-site Proton donor is E128. A glycan (N-linked (GlcNAc...) asparagine) is linked at N261.

This sequence belongs to the glycosyl hydrolase 19 family. Chitinase class I subfamily.

It carries out the reaction Random endo-hydrolysis of N-acetyl-beta-D-glucosaminide (1-&gt;4)-beta-linkages in chitin and chitodextrins.. In Arabidopsis thaliana (Mouse-ear cress), this protein is Endochitinase At2g43590.